Reading from the N-terminus, the 192-residue chain is Ribosomal RNA small subunit methyltransferase G (192 aa).

S-adenosyl-L-methionine is bound by residues G63, F68, I112 to E113, and R125.

Belongs to the methyltransferase superfamily. RNA methyltransferase RsmG family.

It is found in the cytoplasm. The catalysed reaction is guanosine(527) in 16S rRNA + S-adenosyl-L-methionine = N(7)-methylguanosine(527) in 16S rRNA + S-adenosyl-L-homocysteine. Its function is as follows. Specifically methylates the N7 position of guanine in position 527 of 16S rRNA. The chain is Ribosomal RNA small subunit methyltransferase G from Rickettsia bellii (strain OSU 85-389).